The following is a 206-amino-acid chain: ATP-dependent Clp protease proteolytic subunit 1 (206 aa).

Ser106 serves as the catalytic Nucleophile. Residue His131 is part of the active site.

Belongs to the peptidase S14 family. Fourteen ClpP subunits assemble into 2 heptameric rings which stack back to back to give a disk-like structure with a central cavity, resembling the structure of eukaryotic proteasomes.

Its subcellular location is the cytoplasm. It catalyses the reaction Hydrolysis of proteins to small peptides in the presence of ATP and magnesium. alpha-casein is the usual test substrate. In the absence of ATP, only oligopeptides shorter than five residues are hydrolyzed (such as succinyl-Leu-Tyr-|-NHMec, and Leu-Tyr-Leu-|-Tyr-Trp, in which cleavage of the -Tyr-|-Leu- and -Tyr-|-Trp bonds also occurs).. Cleaves peptides in various proteins in a process that requires ATP hydrolysis. Has a chymotrypsin-like activity. Plays a major role in the degradation of misfolded proteins. The protein is ATP-dependent Clp protease proteolytic subunit 1 of Methylococcus capsulatus (strain ATCC 33009 / NCIMB 11132 / Bath).